The chain runs to 143 residues: Putative pre-16S rRNA nuclease (143 aa).

This sequence belongs to the YqgF nuclease family.

It localises to the cytoplasm. Could be a nuclease involved in processing of the 5'-end of pre-16S rRNA. The sequence is that of Putative pre-16S rRNA nuclease from Lactobacillus johnsonii (strain CNCM I-12250 / La1 / NCC 533).